Here is a 471-residue protein sequence, read N- to C-terminus: MDTIIEPFRIKSVEPIQLTSRAERERMIRDAHYNLFNLHADDVIIDLLTDSGTSAMSAAQWAGLMQGDESYAGSPSYFRFEEAVKDLMPFEHVIPTHQGRAAERILMGIVAGPDAKIPSNTHFDTTRANIEATGAEAVDLVIDAGHVPDAEHPFKGNINLDRLEALLDAEGDRVPIVMLTVTNNTGGGQPVSLANIRGAKALCDTYDVPLVLDACRFAENAYFIKQREDGYGDRSVKEIVREMFSHADGMTMSAKKDALVNIGGWLALDDDAWARKARNQLILTEGFPTYGGLAGRDLEAIAVGLQEIVDEDYLEYRMASTRYLGEALTELGVPIVKPVGGHAVYIDAKSLLPHIPPLDYPAQSLAVALYVTGGIRGVEIGSVMFGRQPDGSEEPADQELLRLAIPRRVYTQSHVDYVIECFEALVGRKGALCGYEITEEPPQLRHFTAHLRPKAPEAVHHETDGPVEASS.

An N6-(pyridoxal phosphate)lysine modification is found at Lys256.

It belongs to the beta-eliminating lyase family. As to quaternary structure, homotetramer. Pyridoxal 5'-phosphate is required as a cofactor.

The enzyme catalyses L-tryptophan + H2O = indole + pyruvate + NH4(+). It participates in amino-acid degradation; L-tryptophan degradation via pyruvate pathway; indole and pyruvate from L-tryptophan: step 1/1. This is Tryptophanase from Salinibacter ruber (strain DSM 13855 / M31).